The chain runs to 122 residues: Large ribosomal subunit protein uL14 (122 aa).

Belongs to the universal ribosomal protein uL14 family. In terms of assembly, part of the 50S ribosomal subunit. Forms a cluster with proteins L3 and L19. In the 70S ribosome, L14 and L19 interact and together make contacts with the 16S rRNA in bridges B5 and B8.

Its function is as follows. Binds to 23S rRNA. Forms part of two intersubunit bridges in the 70S ribosome. This chain is Large ribosomal subunit protein uL14, found in Bradyrhizobium sp. (strain BTAi1 / ATCC BAA-1182).